Reading from the N-terminus, the 411-residue chain is Chorismate synthase (411 aa).

Positions 40 and 46 each coordinate NADP(+). Residues 135 to 137 (RAS) and 256 to 257 (QA) contribute to the FMN site. The disordered stretch occupies residues 278–299 (HDGIARGADGRPRRTSDRAGGI). The segment covering 285 to 294 (ADGRPRRTSD) has biased composition (basic and acidic residues). FMN-binding positions include alanine 301, 316 to 320 (KPIAT), and arginine 342.

It belongs to the chorismate synthase family. Homotetramer. Requires FMNH2 as cofactor.

The enzyme catalyses 5-O-(1-carboxyvinyl)-3-phosphoshikimate = chorismate + phosphate. It functions in the pathway metabolic intermediate biosynthesis; chorismate biosynthesis; chorismate from D-erythrose 4-phosphate and phosphoenolpyruvate: step 7/7. Its function is as follows. Catalyzes the anti-1,4-elimination of the C-3 phosphate and the C-6 proR hydrogen from 5-enolpyruvylshikimate-3-phosphate (EPSP) to yield chorismate, which is the branch point compound that serves as the starting substrate for the three terminal pathways of aromatic amino acid biosynthesis. This reaction introduces a second double bond into the aromatic ring system. The sequence is that of Chorismate synthase from Micrococcus luteus (strain ATCC 4698 / DSM 20030 / JCM 1464 / CCM 169 / CCUG 5858 / IAM 1056 / NBRC 3333 / NCIMB 9278 / NCTC 2665 / VKM Ac-2230) (Micrococcus lysodeikticus).